The following is a 414-amino-acid chain: Cytosolic-abundant heat soluble protein 89226 (414 aa).

Composition is skewed to basic and acidic residues over residues 27–45 and 69–84; these read IGED…DKRP and AGQR…ERLR. Residues 27–155 are disordered; sequence IGEDRGKEDP…SNPGMNNGMT (129 aa). Low complexity-rich tracts occupy residues 86 to 101 and 120 to 134; these read SRSS…VEPS and SSNR…SSSD. The segment covering 142 to 155 has biased composition (polar residues); the sequence is ASRNSNPGMNNGMT. 2 CAHS motif regions span residues 305-323 and 342-360; these read YRNA…LERQ and QQQE…LEQE. The stretch at 341 to 376 forms a coiled coil; it reads RQQQEIRLEAEYAMRALEQERVNARAALDQAMASTN. Positions 388 to 405 are enriched in polar residues; the sequence is THSQGRVTTTSESRTSQA. Positions 388-414 are disordered; it reads THSQGRVTTTSESRTSQARGPATAAVI.

Belongs to the Cytosolic-abundant heat soluble protein (CAHS) family.

It localises to the cytoplasm. CAHS proteins are cytosolic heat soluble proteins that seem to contribute to the anhydrobiosis in tardigrades, but their specific mechanisms are yet to be identified. It is possible that protection during anhydrobiosis might occur via the stabilization of vitrifying small molecules such as sugars, but not via the direct glass transition of CAHS proteins themselves. This Hypsibius exemplaris (Freshwater tardigrade) protein is Cytosolic-abundant heat soluble protein 89226.